Consider the following 301-residue polypeptide: Acetylglutamate kinase (301 aa).

Residues 68 to 69 (GG), Arg90, and Asn195 contribute to the substrate site.

This sequence belongs to the acetylglutamate kinase family. ArgB subfamily.

It localises to the cytoplasm. It catalyses the reaction N-acetyl-L-glutamate + ATP = N-acetyl-L-glutamyl 5-phosphate + ADP. It participates in amino-acid biosynthesis; L-arginine biosynthesis; N(2)-acetyl-L-ornithine from L-glutamate: step 2/4. In terms of biological role, catalyzes the ATP-dependent phosphorylation of N-acetyl-L-glutamate. This Pseudomonas fluorescens (strain SBW25) protein is Acetylglutamate kinase.